Consider the following 364-residue polypeptide: Abhydrolase domain-containing protein C57A10.08c (364 aa).

Residues 1–8 (MYFFTISR) are Cytoplasmic-facing. The helical; Signal-anchor for type II membrane protein transmembrane segment at 9–29 (LTSFISYGILGALGILTFLYL) threads the bilayer. The Lumenal segment spans residues 30–364 (YDAYLAKSFQ…DKFSTTDHNI (335 aa)). Residue Ser183 is the Charge relay system of the active site. The N-linked (GlcNAc...) asparagine glycan is linked to Asn326. The Charge relay system role is filled by His336.

It belongs to the AB hydrolase superfamily.

The protein resides in the endoplasmic reticulum membrane. This is Abhydrolase domain-containing protein C57A10.08c from Schizosaccharomyces pombe (strain 972 / ATCC 24843) (Fission yeast).